Consider the following 177-residue polypeptide: Inorganic pyrophosphatase (177 aa).

The substrate site is built by Lys31, Arg45, and Tyr57. The Mg(2+) site is built by Asp67, Asp72, and Asp104. Tyr142 provides a ligand contact to substrate.

Belongs to the PPase family. As to quaternary structure, homohexamer. The cofactor is Mg(2+).

Its subcellular location is the cytoplasm. The enzyme catalyses diphosphate + H2O = 2 phosphate + H(+). Catalyzes the hydrolysis of inorganic pyrophosphate (PPi) forming two phosphate ions. In Neisseria meningitidis serogroup B (strain ATCC BAA-335 / MC58), this protein is Inorganic pyrophosphatase.